A 70-amino-acid chain; its full sequence is DNA gyrase inhibitor YacG (70 aa).

C9, C12, C28, and C32 together coordinate Zn(2+). The tract at residues 43 to 70 (ESRKIPGSSIDPESIVTSNNKQDNEDEQ) is disordered.

Belongs to the DNA gyrase inhibitor YacG family. Interacts with GyrB. Requires Zn(2+) as cofactor.

Inhibits all the catalytic activities of DNA gyrase by preventing its interaction with DNA. Acts by binding directly to the C-terminal domain of GyrB, which probably disrupts DNA binding by the gyrase. In Legionella pneumophila (strain Paris), this protein is DNA gyrase inhibitor YacG.